A 159-amino-acid polypeptide reads, in one-letter code: Protein US8.5 (159 aa).

The segment at 27–107 is disordered; the sequence is SSQPLDPEGP…APSPHPRPPG (81 aa). The segment covering 80-91 has biased composition (basic and acidic residues); the sequence is SDERGPPRHDRP.

It belongs to the HHV-1 US8.5 protein family. Post-translationally, phosphorylated.

The protein localises to the host nucleus. It localises to the host nucleolus. This chain is Protein US8.5, found in Human herpesvirus 1 (strain 17) (HHV-1).